A 529-amino-acid polypeptide reads, in one-letter code: Autophagy-related protein 21 (529 aa).

Polar residues predominate over residues 49-62; sequence NSLEDSAGCQNPTH. The segment at 49–70 is disordered; that stretch reads NSLEDSAGCQNPTHSKTDSQDT. WD repeat units follow at residues 271–311 and 321–361; these read AHHS…GKVK and GHNL…SDIC. A L/FRRG motif motif is present at residues 318 to 322; that stretch reads LRRGH. A disordered region spans residues 362–388; sequence TNENSEDRTNHNSDYEDSDGDTSKSSE. The segment covering 366 to 375 has biased composition (basic and acidic residues); sequence SEDRTNHNSD.

Belongs to the WD repeat PROPPIN family.

The protein localises to the cytoplasm. The protein resides in the membrane. Its subcellular location is the vacuole membrane. Its function is as follows. Required for cytoplasm to vacuole transport (Cvt) vesicles formation and mitophagy. Involved in binding of phosphatidylethanolamine to ATG8 and in recruitment of ATG8 and ATG5 to the pre-autophagosomal structure. Protects ATG8 from ARG4-mediated cleavage. The protein is Autophagy-related protein 21 (ATG21) of Candida albicans (strain SC5314 / ATCC MYA-2876) (Yeast).